Reading from the N-terminus, the 185-residue chain is Urease accessory protein UreE (185 aa).

The tract at residues 153–185 (LRANSAQGHGHSHSHSHDHHGYHHHGDGHWHKH) is disordered. Positions 162–175 (GHSHSHSHDHHGYH) are enriched in basic residues. Residues 176 to 185 (HHGDGHWHKH) are compositionally biased toward basic and acidic residues.

Belongs to the UreE family.

The protein localises to the cytoplasm. Involved in urease metallocenter assembly. Binds nickel. Probably functions as a nickel donor during metallocenter assembly. The polypeptide is Urease accessory protein UreE (Haemophilus influenzae (strain 86-028NP)).